The following is a 278-amino-acid chain: Phosphatidylglycerol--prolipoprotein diacylglyceryl transferase (278 aa).

4 helical membrane-spanning segments follow: residues 18 to 38 (IQVH…TILA), 55 to 75 (LILW…VIFE), 90 to 110 (WDGG…VYLF), and 115 to 135 (WIPV…AQGI). Arg-137 is a binding site for a 1,2-diacyl-sn-glycero-3-phospho-(1'-sn-glycerol). The next 3 membrane-spanning stretches (helical) occupy residues 177 to 197 (QPTF…LMSL), 207 to 227 (GEVF…VEGM), and 237 to 257 (IRVS…ILVF).

Belongs to the Lgt family.

It is found in the cell membrane. The enzyme catalyses L-cysteinyl-[prolipoprotein] + a 1,2-diacyl-sn-glycero-3-phospho-(1'-sn-glycerol) = an S-1,2-diacyl-sn-glyceryl-L-cysteinyl-[prolipoprotein] + sn-glycerol 1-phosphate + H(+). Its pathway is protein modification; lipoprotein biosynthesis (diacylglyceryl transfer). Its function is as follows. Catalyzes the transfer of the diacylglyceryl group from phosphatidylglycerol to the sulfhydryl group of the N-terminal cysteine of a prolipoprotein, the first step in the formation of mature lipoproteins. The chain is Phosphatidylglycerol--prolipoprotein diacylglyceryl transferase from Pediococcus pentosaceus (strain ATCC 25745 / CCUG 21536 / LMG 10740 / 183-1w).